Consider the following 199-residue polypeptide: Ribosomal RNA large subunit methyltransferase E (199 aa).

S-adenosyl-L-methionine is bound by residues G53, W55, D73, D92, and D114. Catalysis depends on K154, which acts as the Proton acceptor.

Belongs to the class I-like SAM-binding methyltransferase superfamily. RNA methyltransferase RlmE family.

The protein resides in the cytoplasm. The catalysed reaction is uridine(2552) in 23S rRNA + S-adenosyl-L-methionine = 2'-O-methyluridine(2552) in 23S rRNA + S-adenosyl-L-homocysteine + H(+). In terms of biological role, specifically methylates the uridine in position 2552 of 23S rRNA at the 2'-O position of the ribose in the fully assembled 50S ribosomal subunit. This Treponema denticola (strain ATCC 35405 / DSM 14222 / CIP 103919 / JCM 8153 / KCTC 15104) protein is Ribosomal RNA large subunit methyltransferase E.